The chain runs to 447 residues: Signal recognition particle 54 kDa protein (447 aa).

GTP contacts are provided by residues glycine 108–threonine 115, aspartate 188–arginine 192, and threonine 246–aspartate 249.

Belongs to the GTP-binding SRP family. SRP54 subfamily. In terms of assembly, part of the signal recognition particle protein translocation system, which is composed of SRP and FtsY. Archaeal SRP consists of a 7S RNA molecule of 300 nucleotides and two protein subunits: SRP54 and SRP19.

It is found in the cytoplasm. It catalyses the reaction GTP + H2O = GDP + phosphate + H(+). Involved in targeting and insertion of nascent membrane proteins into the cytoplasmic membrane. Binds to the hydrophobic signal sequence of the ribosome-nascent chain (RNC) as it emerges from the ribosomes. The SRP-RNC complex is then targeted to the cytoplasmic membrane where it interacts with the SRP receptor FtsY. The protein is Signal recognition particle 54 kDa protein of Methanopyrus kandleri (strain AV19 / DSM 6324 / JCM 9639 / NBRC 100938).